A 205-amino-acid polypeptide reads, in one-letter code: Holliday junction branch migration complex subunit RuvA (205 aa).

A domain I region spans residues M1–R64. Residues S65–V143 are domain II. Residues H144–A154 form a flexible linker region. The segment at A154–K205 is domain III.

It belongs to the RuvA family. Homotetramer. Forms an RuvA(8)-RuvB(12)-Holliday junction (HJ) complex. HJ DNA is sandwiched between 2 RuvA tetramers; dsDNA enters through RuvA and exits via RuvB. An RuvB hexamer assembles on each DNA strand where it exits the tetramer. Each RuvB hexamer is contacted by two RuvA subunits (via domain III) on 2 adjacent RuvB subunits; this complex drives branch migration. In the full resolvosome a probable DNA-RuvA(4)-RuvB(12)-RuvC(2) complex forms which resolves the HJ.

It localises to the cytoplasm. Functionally, the RuvA-RuvB-RuvC complex processes Holliday junction (HJ) DNA during genetic recombination and DNA repair, while the RuvA-RuvB complex plays an important role in the rescue of blocked DNA replication forks via replication fork reversal (RFR). RuvA specifically binds to HJ cruciform DNA, conferring on it an open structure. The RuvB hexamer acts as an ATP-dependent pump, pulling dsDNA into and through the RuvAB complex. HJ branch migration allows RuvC to scan DNA until it finds its consensus sequence, where it cleaves and resolves the cruciform DNA. The chain is Holliday junction branch migration complex subunit RuvA from Afipia carboxidovorans (strain ATCC 49405 / DSM 1227 / KCTC 32145 / OM5) (Oligotropha carboxidovorans).